A 622-amino-acid chain; its full sequence is Probable potassium transport system protein Kup (622 aa).

A run of 12 helical transmembrane segments spans residues 8 to 28 (LAALTLGAIGVVYGDIGTSVL), 50 to 70 (VLSVLFWTLTVIVSLKYVVLV), 100 to 120 (GWLLGLGIFGTSLFYGDGVIT), 137 to 157 (PHFGKAVIPLTLVVLFGLFAV), 169 to 189 (FGPVTLVWFFTIAALGVPHIV), 203 to 223 (ALGFILGNPGISFIILGAVVL), 247 to 267 (WFSVAMPALTINYFGQGALLL), 285 to 305 (ALVPLVVLATMATVIASQALI), 337 to 357 (IYLPFVNWSLFVAIVLAVVMF), 366 to 386 (AYGIAVTLDMLITTVLTFFVI), 392 to 412 (YPLALCVATTGFFFVVDLAFF), and 419 to 439 (LLQGGWFPLMIGGLVFTLMMT).

Belongs to the HAK/KUP transporter (TC 2.A.72) family.

It is found in the cell inner membrane. It catalyses the reaction K(+)(in) + H(+)(in) = K(+)(out) + H(+)(out). Functionally, transport of potassium into the cell. Likely operates as a K(+):H(+) symporter. The protein is Probable potassium transport system protein Kup of Acidovorax ebreus (strain TPSY) (Diaphorobacter sp. (strain TPSY)).